The sequence spans 197 residues: Imidazoleglycerol-phosphate dehydratase (197 aa).

It belongs to the imidazoleglycerol-phosphate dehydratase family.

Its subcellular location is the cytoplasm. The enzyme catalyses D-erythro-1-(imidazol-4-yl)glycerol 3-phosphate = 3-(imidazol-4-yl)-2-oxopropyl phosphate + H2O. The protein operates within amino-acid biosynthesis; L-histidine biosynthesis; L-histidine from 5-phospho-alpha-D-ribose 1-diphosphate: step 6/9. The chain is Imidazoleglycerol-phosphate dehydratase from Saccharophagus degradans (strain 2-40 / ATCC 43961 / DSM 17024).